The following is a 95-amino-acid chain: Cell division protein FtsB (95 aa).

The Cytoplasmic portion of the chain corresponds to 1 to 3 (MKW). The chain crosses the membrane as a helical span at residues 4–21 (VTGLLVVLLLGLQYKLWI). The Periplasmic segment spans residues 22-95 (GEGSVAEVWQ…QVVGRPGETP (74 aa)). Residues 26–73 (VAEVWQLRQTLEAQRAENEELRYRNAALDAEVTDLKTGLDAIEERARR) are a coiled coil.

It belongs to the FtsB family. As to quaternary structure, part of a complex composed of FtsB, FtsL and FtsQ.

It localises to the cell inner membrane. Its function is as follows. Essential cell division protein. May link together the upstream cell division proteins, which are predominantly cytoplasmic, with the downstream cell division proteins, which are predominantly periplasmic. This is Cell division protein FtsB from Thioalkalivibrio sulfidiphilus (strain HL-EbGR7).